The following is a 456-amino-acid chain: 3-isopropylmalate dehydratase large subunit (456 aa).

[4Fe-4S] cluster is bound by residues C336, C396, and C399.

It belongs to the aconitase/IPM isomerase family. LeuC type 1 subfamily. In terms of assembly, heterodimer of LeuC and LeuD. [4Fe-4S] cluster is required as a cofactor.

The catalysed reaction is (2R,3S)-3-isopropylmalate = (2S)-2-isopropylmalate. Its pathway is amino-acid biosynthesis; L-leucine biosynthesis; L-leucine from 3-methyl-2-oxobutanoate: step 2/4. Functionally, catalyzes the isomerization between 2-isopropylmalate and 3-isopropylmalate, via the formation of 2-isopropylmaleate. The chain is 3-isopropylmalate dehydratase large subunit from Staphylococcus aureus (strain MW2).